A 215-amino-acid polypeptide reads, in one-letter code: MKIVLLGPPGAGKGTQAKSISNRYSIPHISTGDIFRKNISENTPLGMEARSYMDKGLLVPDEVTINMVKDRLQEEDCLSGYLLDGFPRTVAQAEALNEFLENRNEQLDTALLIDVPSEFILDRMTGRRVCTSCGGSFHIKFNPPTIDGKCNLCGSDIVQRKDDTVETVKERIDVYDKQTQPLIEFYKSKNLLSMVDGTKAIDQVFEDICKLLGEQ.

Residue 10 to 15 participates in ATP binding; the sequence is GAGKGT. Residues 30-59 are NMP; the sequence is STGDIFRKNISENTPLGMEARSYMDKGLLV. AMP contacts are provided by residues Thr-31, Arg-36, 57 to 59, 85 to 88, and Gln-92; these read LLV and GFPR. The tract at residues 126–163 is LID; it reads GRRVCTSCGGSFHIKFNPPTIDGKCNLCGSDIVQRKDD. Arg-127 contributes to the ATP binding site. Zn(2+) contacts are provided by Cys-130 and Cys-133. An ATP-binding site is contributed by 136–137; the sequence is SF. Residues Cys-150 and Cys-153 each coordinate Zn(2+). AMP-binding residues include Arg-160 and Arg-171. Lys-199 serves as a coordination point for ATP.

This sequence belongs to the adenylate kinase family. As to quaternary structure, monomer.

It localises to the cytoplasm. The catalysed reaction is AMP + ATP = 2 ADP. The protein operates within purine metabolism; AMP biosynthesis via salvage pathway; AMP from ADP: step 1/1. Catalyzes the reversible transfer of the terminal phosphate group between ATP and AMP. Plays an important role in cellular energy homeostasis and in adenine nucleotide metabolism. In Clostridium botulinum (strain Eklund 17B / Type B), this protein is Adenylate kinase.